Here is a 599-residue protein sequence, read N- to C-terminus: NADH-quinone oxidoreductase subunit C/D (599 aa).

The NADH dehydrogenase I subunit C stretch occupies residues 1–189 (MTELMTQNSA…DPFVLTKQKE (189 aa)). Residues 213–599 (DFMFLNLGPN…IDFVMSDVDR (387 aa)) are NADH dehydrogenase I subunit D.

It in the N-terminal section; belongs to the complex I 30 kDa subunit family. In the C-terminal section; belongs to the complex I 49 kDa subunit family. NDH-1 is composed of 13 different subunits. Subunits NuoB, CD, E, F, and G constitute the peripheral sector of the complex.

The protein resides in the cell inner membrane. It carries out the reaction a quinone + NADH + 5 H(+)(in) = a quinol + NAD(+) + 4 H(+)(out). Its function is as follows. NDH-1 shuttles electrons from NADH, via FMN and iron-sulfur (Fe-S) centers, to quinones in the respiratory chain. The immediate electron acceptor for the enzyme in this species is believed to be ubiquinone. Couples the redox reaction to proton translocation (for every two electrons transferred, four hydrogen ions are translocated across the cytoplasmic membrane), and thus conserves the redox energy in a proton gradient. This chain is NADH-quinone oxidoreductase subunit C/D, found in Sodalis glossinidius (strain morsitans).